Reading from the N-terminus, the 203-residue chain is Outer-membrane lipoprotein LolB (203 aa).

An N-terminal signal peptide occupies residues M1–G18. Residue C19 is the site of N-palmitoyl cysteine attachment. A lipid anchor (S-diacylglycerol cysteine) is attached at C19.

The protein belongs to the LolB family. As to quaternary structure, monomer.

The protein localises to the cell outer membrane. In terms of biological role, plays a critical role in the incorporation of lipoproteins in the outer membrane after they are released by the LolA protein. The sequence is that of Outer-membrane lipoprotein LolB from Vibrio parahaemolyticus serotype O3:K6 (strain RIMD 2210633).